A 358-amino-acid chain; its full sequence is Membrane-bound lytic murein transglycosylase C (358 aa).

The N-terminal stretch at 1–16 (MKKILALLVIAPLLIS) is a signal peptide. Residue cysteine 17 is the site of N-palmitoyl cysteine attachment. Cysteine 17 carries the S-diacylglycerol cysteine lipid modification.

It belongs to the transglycosylase Slt family.

It is found in the cell outer membrane. It carries out the reaction Exolytic cleavage of the (1-&gt;4)-beta-glycosidic linkage between N-acetylmuramic acid (MurNAc) and N-acetylglucosamine (GlcNAc) residues in peptidoglycan, from either the reducing or the non-reducing ends of the peptidoglycan chains, with concomitant formation of a 1,6-anhydrobond in the MurNAc residue.. Its function is as follows. Murein-degrading enzyme. May play a role in recycling of muropeptides during cell elongation and/or cell division. The polypeptide is Membrane-bound lytic murein transglycosylase C (Serratia proteamaculans (strain 568)).